Consider the following 139-residue polypeptide: Ribulose bisphosphate carboxylase small subunit (139 aa).

This sequence belongs to the RuBisCO small chain family. Heterohexadecamer of 8 large and 8 small subunits.

It localises to the plastid. The protein localises to the chloroplast. In terms of biological role, ruBisCO catalyzes two reactions: the carboxylation of D-ribulose 1,5-bisphosphate, the primary event in carbon dioxide fixation, as well as the oxidative fragmentation of the pentose substrate in the photorespiration process. Both reactions occur simultaneously and in competition at the same active site. Although the small subunit is not catalytic it is essential for maximal activity. This chain is Ribulose bisphosphate carboxylase small subunit, found in Olisthodiscus luteus (Marine phytoflagellate).